Here is a 337-residue protein sequence, read N- to C-terminus: DNA-directed RNA polymerase subunit alpha (337 aa).

An alpha N-terminal domain (alpha-NTD) region spans residues 1–233 (MVREEIAEST…DLFVPFLHAE (233 aa)). The alpha C-terminal domain (alpha-CTD) stretch occupies residues 266–337 (GIPLKYIFID…FAVDLPKVLI (72 aa)).

Belongs to the RNA polymerase alpha chain family. In plastids the minimal PEP RNA polymerase catalytic core is composed of four subunits: alpha, beta, beta', and beta''. When a (nuclear-encoded) sigma factor is associated with the core the holoenzyme is formed, which can initiate transcription.

It is found in the plastid. Its subcellular location is the chloroplast. The catalysed reaction is RNA(n) + a ribonucleoside 5'-triphosphate = RNA(n+1) + diphosphate. Functionally, DNA-dependent RNA polymerase catalyzes the transcription of DNA into RNA using the four ribonucleoside triphosphates as substrates. This chain is DNA-directed RNA polymerase subunit alpha, found in Dioscorea elephantipes (Elephant's foot yam).